Reading from the N-terminus, the 473-residue chain is Myocyte-specific enhancer factor 2C (473 aa).

One can recognise an MADS-box domain in the interval 1–61; the sequence is MGRKKIQITR…NKLFQYASTD (61 aa). An N6-acetyllysine modification is found at K4. Positions 58–86 form a DNA-binding region, mef2-type; the sequence is ASTDMDKVLLKYTEYNEPHESRTNSDIVE. Position 59 is a phosphoserine; by CK2 (S59). The tract at residues 91–116 is disordered; the sequence is KGLNGCDSPDPDADDSVGHSPESEDK. A phosphoserine mark is found at S98, S106, and S110. 2 positions are modified to N6-acetyllysine: K116 and K119. A disordered region spans residues 180 to 206; that stretch reads NSMSPGVTHRPPSAGNTGGLMGGDLTS. Phosphoserine is present on residues S222 and S228. K234 and K239 each carry N6-acetyllysine. Position 240 is a phosphoserine (S240). N6-acetyllysine is present on residues K252 and K264. The tract at residues 271 to 278 is beta domain; that stretch reads SEDVDLLL. T293 and T300 each carry phosphothreonine; by MAPK14. The transcription repressor stretch occupies residues 368–399; that stretch reads ACTSTHLSQSSNLSLPSTQSLNIKSEPVSPPR. A compositionally biased stretch (polar residues) spans 375 to 390; that stretch reads SQSSNLSLPSTQSLNI. Positions 375–473 are disordered; the sequence is SQSSNLSLPS…RMRLSEGWAT (99 aa). A Glycyl lysine isopeptide (Lys-Gly) (interchain with G-Cter in SUMO) cross-link involves residue K391. The residue at position 396 (S396) is a Phosphoserine; by CDK5. The residue at position 419 (S419) is a Phosphoserine; by MAPK7. The segment covering 419-432 has biased composition (low complexity); it reads SPVDSLSSCSSSYD. Residues 433–443 show a composition bias toward basic and acidic residues; that stretch reads GSDREDHRNEF. Residue S445 is modified to Phosphoserine.

It belongs to the MEF2 family. As to quaternary structure, forms a complex with class II HDACs in undifferentiating cells. On myogenic differentiation, HDACs are released into the cytoplasm allowing MEF2s to interact with other proteins for activation. Interacts with EP300 in differentiating cells; the interaction acetylates MEF2C leading to increased DNA binding and activation. Interacts with HDAC7 and CARM1. Interacts with HDAC4 and HDAC9; the interaction with HDACs represses transcriptional activity. Interacts with LPIN1. Interacts with MYOCD. Interacts with AKAP13. Interacts with FOXK1; the interaction inhibits MEF2C transactivation activity. Interacts (via N-terminus) with HABP4; this interaction decreases DNA-binding activity of MEF2C in myocardial cells in response to mechanical stress. Interacts with JPH2; interaction specifically takes place with the Junctophilin-2 N-terminal fragment cleavage product of JPH2. Interacts (via MADS box) with SOX18. Interacts with PHF7; the interaction promotes MEF2C binding to its transcription targets. Post-translationally, phosphorylated on Ser-59; which enhances DNA binding activity. Phosphorylated on Ser-396; which is required for Lys-391 sumoylation and inhibits transcriptional activity. In terms of processing, acetylated by p300 on several sites in diffentiating myocytes. Acetylation on Lys-4 increases DNA binding and transactivation. Sumoylated on Lys-391 with SUMO2 but not SUMO1; which represses transcriptional activity. Post-translationally, proteolytically cleaved in cerebellar granule neurons on several sites by caspase 3 and caspase 7 following neurotoxicity. Preferentially cleaves the CDK5-mediated hyperphosphorylated form which leads to neuron apoptosis and transcriptional inactivation. As to expression, expressed in the heart. Expressed in cardiac myocytes (at protein level).

It is found in the nucleus. It localises to the cytoplasm. The protein localises to the sarcoplasm. Functionally, transcription activator which binds specifically to the MEF2 element present in the regulatory regions of many muscle-specific genes. Controls cardiac morphogenesis and myogenesis, and is also involved in vascular development. Enhances transcriptional activation mediated by SOX18. Plays an essential role in hippocampal-dependent learning and memory by suppressing the number of excitatory synapses and thus regulating basal and evoked synaptic transmission. Crucial for normal neuronal development, distribution, and electrical activity in the neocortex. Necessary for proper development of megakaryocytes and platelets and for bone marrow B-lymphopoiesis. Required for B-cell survival and proliferation in response to BCR stimulation, efficient IgG1 antibody responses to T-cell-dependent antigens and for normal induction of germinal center B-cells. May also be involved in neurogenesis and in the development of cortical architecture. In Rattus norvegicus (Rat), this protein is Myocyte-specific enhancer factor 2C.